We begin with the raw amino-acid sequence, 357 residues long: GTPase Obg (357 aa).

An Obg domain is found at 1 to 159 (MKFVDEAFID…KSLKLELKVL (159 aa)). The OBG-type G domain maps to 160-334 (ADVGLLGMPN…LVQSIFQHVH (175 aa)). GTP contacts are provided by residues 166-173 (GMPNAGKS), 191-195 (FTTLH), 213-216 (DIPG), 284-287 (NKLD), and 315-317 (SAL). S173 and T193 together coordinate Mg(2+).

Belongs to the TRAFAC class OBG-HflX-like GTPase superfamily. OBG GTPase family. Monomer. Mg(2+) serves as cofactor.

It localises to the cytoplasm. An essential GTPase which binds GTP, GDP and possibly (p)ppGpp with moderate affinity, with high nucleotide exchange rates and a fairly low GTP hydrolysis rate. Plays a role in control of the cell cycle, stress response, ribosome biogenesis and in those bacteria that undergo differentiation, in morphogenesis control. This Acidovorax sp. (strain JS42) protein is GTPase Obg.